Reading from the N-terminus, the 278-residue chain is HTH-type transcriptional activator RhaS (278 aa).

The 99-residue stretch at 174–272 folds into the HTH araC/xylS-type domain; that stretch reads NLLLAWLEDH…NWSPRDIRQG (99 aa). 2 DNA-binding regions (H-T-H motif) span residues 191-212 and 239-262; these read DAVADQFSLSLRTLHRQLKQQT and VTDIAYHCGFSDSNHFSTLFRREF.

As to quaternary structure, binds DNA as a dimer.

Its subcellular location is the cytoplasm. In terms of biological role, activates expression of the rhaBAD and rhaT operons. In Escherichia coli O157:H7, this protein is HTH-type transcriptional activator RhaS.